The chain runs to 806 residues: NADH:(hydroxy)cinnamate reductase subunit CrdB (806 aa).

The residue at position 257 (Ser257) is an FMN phosphoryl serine. Residues Ala310, Glu329, Asn337, Thr338, Gly342, Gly343, and Asp576 each coordinate FAD. Arg635 functions as the Proton donor in the catalytic mechanism. 4 residues coordinate FAD: His742, Glu771, Ala786, and Leu787.

The protein belongs to the FAD-dependent oxidoreductase 2 family. FRD/SDH subfamily. NADH:(hydroxy)cinnamate reductase Crd is a heterodimer composed of CrdA and CrdB subunits, encoded by adjacent genes. FAD is required as a cofactor. It depends on FMN as a cofactor. Is flavinylated on Ser-257 by ApbE, encoded in a neighboring gene. Covalent attachment of FMN is essential for catalytic activity.

It catalyses the reaction 3-phenylpropanoate + NAD(+) = (E)-cinnamate + NADH + H(+). It carries out the reaction 3-(3,4-dihydroxyphenyl)propanoate + NAD(+) = (E)-caffeate + NADH + H(+). The enzyme catalyses phloretate + NAD(+) = (E)-4-coumarate + NADH + H(+). The catalysed reaction is dihydroferulate + NAD(+) = (E)-ferulate + NADH + H(+). With respect to regulation, is inactivated by molecular oxygen, allowing regulation of Crd activity by medium oxygen level. Functionally, component of the NADH:(hydroxy)cinnamate reductase Crd that catalyzes the reduction of the double bond in cinnamate, p-coumarate, caffeate, and ferulate under anaerobic conditions with NADH or methyl viologen as the electron donor. Is moderately active against acrylate and practically inactive against urocanate, fumarate, methacrylate and crotonate. CrdB is the catalytic subunit that binds substrates. Is likely involved in protecting V.ruber from (hydroxy)cinnamate poisoning. This is NADH:(hydroxy)cinnamate reductase subunit CrdB from Vibrio ruber (strain DSM 16370 / JCM 11486 / BCRC 17186 / CECT 7878 / LMG 23124 / VR1).